The following is a 154-amino-acid chain: NADPH-dependent 7-cyano-7-deazaguanine reductase (154 aa).

Positions 1 to 23 (MPNTDVSSLSMLGQQTETAQSPE) are enriched in polar residues. The tract at residues 1 to 26 (MPNTDVSSLSMLGQQTETAQSPEQAV) is disordered. Cysteine 52 serves as the catalytic Thioimide intermediate. Aspartate 59 functions as the Proton donor in the catalytic mechanism. Substrate is bound by residues 74-76 (VES) and 93-94 (HE).

The protein belongs to the GTP cyclohydrolase I family. QueF type 1 subfamily.

It is found in the cytoplasm. The catalysed reaction is 7-aminomethyl-7-carbaguanine + 2 NADP(+) = 7-cyano-7-deazaguanine + 2 NADPH + 3 H(+). The protein operates within tRNA modification; tRNA-queuosine biosynthesis. Catalyzes the NADPH-dependent reduction of 7-cyano-7-deazaguanine (preQ0) to 7-aminomethyl-7-deazaguanine (preQ1). The polypeptide is NADPH-dependent 7-cyano-7-deazaguanine reductase (Rhizobium leguminosarum bv. trifolii (strain WSM2304)).